The chain runs to 169 residues: Peptide methionine sulfoxide reductase MsrA (169 aa).

The active site involves C13.

This sequence belongs to the MsrA Met sulfoxide reductase family.

It carries out the reaction L-methionyl-[protein] + [thioredoxin]-disulfide + H2O = L-methionyl-(S)-S-oxide-[protein] + [thioredoxin]-dithiol. The enzyme catalyses [thioredoxin]-disulfide + L-methionine + H2O = L-methionine (S)-S-oxide + [thioredoxin]-dithiol. Has an important function as a repair enzyme for proteins that have been inactivated by oxidation. Catalyzes the reversible oxidation-reduction of methionine sulfoxide in proteins to methionine. In Mycolicibacterium gilvum (strain PYR-GCK) (Mycobacterium gilvum (strain PYR-GCK)), this protein is Peptide methionine sulfoxide reductase MsrA.